The sequence spans 636 residues: Bifunctional phosphonoacetaldehyde hydrolase/aminoethylphosphonate transaminase (636 aa).

The segment at 1–276 (MKKIYGEKIK…IKSDFVPEND (276 aa)) is phosphonoacetaldehyde hydrolase. D15 (nucleophile) is an active-site residue. D15 and A17 together coordinate Mg(2+). The active-site Schiff-base intermediate with substrate is K56. D189 serves as a coordination point for Mg(2+). Residues 277–636 (YILLTPGPLS…ADVIEKFINR (360 aa)) form a 2-aminoethylphosphonate--pyruvate transaminase region. N6-(pyridoxal phosphate)lysine is present on K465.

This sequence in the N-terminal section; belongs to the HAD-like hydrolase superfamily. PhnX family. It in the C-terminal section; belongs to the class-V pyridoxal-phosphate-dependent aminotransferase family. PhnW subfamily. Homodimer. Mg(2+) is required as a cofactor. It depends on pyridoxal 5'-phosphate as a cofactor.

It catalyses the reaction (2-aminoethyl)phosphonate + pyruvate = phosphonoacetaldehyde + L-alanine. It carries out the reaction phosphonoacetaldehyde + H2O = acetaldehyde + phosphate + H(+). Functionally, involved in phosphonate degradation. The sequence is that of Bifunctional phosphonoacetaldehyde hydrolase/aminoethylphosphonate transaminase (phnXW) from Clostridioides difficile (strain 630) (Peptoclostridium difficile).